Here is a 1319-residue protein sequence, read N- to C-terminus: DNA-directed RNA polymerase subunit beta' (1319 aa).

Residues C59, C61, C74, and C77 each contribute to the Zn(2+) site. Mg(2+)-binding residues include D449, D451, and D453. The Zn(2+) site is built by C773, C846, C853, and C856.

It belongs to the RNA polymerase beta' chain family. In terms of assembly, the RNAP catalytic core consists of 2 alpha, 1 beta, 1 beta' and 1 omega subunit. When a sigma factor is associated with the core the holoenzyme is formed, which can initiate transcription. Mg(2+) serves as cofactor. Zn(2+) is required as a cofactor.

The catalysed reaction is RNA(n) + a ribonucleoside 5'-triphosphate = RNA(n+1) + diphosphate. Functionally, DNA-dependent RNA polymerase catalyzes the transcription of DNA into RNA using the four ribonucleoside triphosphates as substrates. This Fusobacterium nucleatum subsp. nucleatum (strain ATCC 25586 / DSM 15643 / BCRC 10681 / CIP 101130 / JCM 8532 / KCTC 2640 / LMG 13131 / VPI 4355) protein is DNA-directed RNA polymerase subunit beta'.